A 464-amino-acid polypeptide reads, in one-letter code: Siroheme synthase (464 aa).

The segment at 1–203 is precorrin-2 dehydrogenase /sirohydrochlorin ferrochelatase; that stretch reads MEFLPLFHNL…GQGAEAERML (203 aa). Residues 22-23 and 43-44 each bind NAD(+); these read EI and PE. The residue at position 128 (Ser128) is a Phosphoserine. Positions 216-464 are uroporphyrinogen-III C-methyltransferase; it reads GEVYLVGAGP…AWFEGAQATL (249 aa). Pro225 contributes to the S-adenosyl-L-methionine binding site. The active-site Proton acceptor is the Asp248. Lys270 functions as the Proton donor in the catalytic mechanism. Residues 301-303, Ile306, 331-332, Met383, and Gly412 each bind S-adenosyl-L-methionine; these read GGD and TA.

In the N-terminal section; belongs to the precorrin-2 dehydrogenase / sirohydrochlorin ferrochelatase family. It in the C-terminal section; belongs to the precorrin methyltransferase family.

The enzyme catalyses uroporphyrinogen III + 2 S-adenosyl-L-methionine = precorrin-2 + 2 S-adenosyl-L-homocysteine + H(+). The catalysed reaction is precorrin-2 + NAD(+) = sirohydrochlorin + NADH + 2 H(+). It catalyses the reaction siroheme + 2 H(+) = sirohydrochlorin + Fe(2+). It participates in cofactor biosynthesis; adenosylcobalamin biosynthesis; precorrin-2 from uroporphyrinogen III: step 1/1. The protein operates within cofactor biosynthesis; adenosylcobalamin biosynthesis; sirohydrochlorin from precorrin-2: step 1/1. It functions in the pathway porphyrin-containing compound metabolism; siroheme biosynthesis; precorrin-2 from uroporphyrinogen III: step 1/1. Its pathway is porphyrin-containing compound metabolism; siroheme biosynthesis; siroheme from sirohydrochlorin: step 1/1. It participates in porphyrin-containing compound metabolism; siroheme biosynthesis; sirohydrochlorin from precorrin-2: step 1/1. In terms of biological role, multifunctional enzyme that catalyzes the SAM-dependent methylations of uroporphyrinogen III at position C-2 and C-7 to form precorrin-2 via precorrin-1. Then it catalyzes the NAD-dependent ring dehydrogenation of precorrin-2 to yield sirohydrochlorin. Finally, it catalyzes the ferrochelation of sirohydrochlorin to yield siroheme. This chain is Siroheme synthase, found in Pseudomonas syringae pv. syringae (strain B728a).